The primary structure comprises 186 residues: Phosphoheptose isomerase 1 (186 aa).

Residues 33 to 186 form the SIS domain; it reads LCECLKKGGK…TLCQIIDESF (154 aa). 48–50 serves as a coordination point for substrate; that stretch reads NGG. 2 residues coordinate Zn(2+): histidine 57 and glutamate 61. Residues glutamate 61, 90 to 91, 116 to 118, serine 121, and glutamine 168 contribute to the substrate site; these read ND and STS. Positions 168 and 176 each coordinate Zn(2+).

The protein belongs to the SIS family. GmhA subfamily. Homotetramer. It depends on Zn(2+) as a cofactor.

It is found in the cytoplasm. It catalyses the reaction 2 D-sedoheptulose 7-phosphate = D-glycero-alpha-D-manno-heptose 7-phosphate + D-glycero-beta-D-manno-heptose 7-phosphate. It participates in carbohydrate biosynthesis; D-glycero-D-manno-heptose 7-phosphate biosynthesis; D-glycero-alpha-D-manno-heptose 7-phosphate and D-glycero-beta-D-manno-heptose 7-phosphate from sedoheptulose 7-phosphate: step 1/1. It functions in the pathway bacterial outer membrane biogenesis; LOS core biosynthesis. Catalyzes the isomerization of sedoheptulose 7-phosphate in D-glycero-D-manno-heptose 7-phosphate. The polypeptide is Phosphoheptose isomerase 1 (gmhA1) (Campylobacter jejuni subsp. jejuni serotype O:2 (strain ATCC 700819 / NCTC 11168)).